The chain runs to 297 residues: Transmembrane protein 178A (297 aa).

The N-terminal stretch at 1–25 (MEPRALVTALSLGLSLCSLGLLVTA) is a signal peptide. Residues 26–179 (IFTDHWYETD…LLHLRRITAG (154 aa)) are Extracellular-facing. The span at 41–57 (ESCERSRAGADPPDQKN) shows a compositional bias: basic and acidic residues. Residues 41-84 (ESCERSRAGADPPDQKNRLMPLSHLPLRDSPPLGRRLLPGGPGR) form a disordered region. A compositionally biased stretch (low complexity) spans 68–79 (RDSPPLGRRLLP). The N-linked (GlcNAc...) asparagine glycan is linked to Asn158. Residues 180 to 200 (FLGMAVAVLLCGCIVATVSFF) traverse the membrane as a helical segment. The Cytoplasmic segment spans residues 201-208 (WEESLTQH). The helical transmembrane segment at 209–229 (VAGLLFLMTGIFCTISLCTYA) threads the bilayer. Topologically, residues 230-257 (ASISYDLNRLPKLIYSLPADVEHGYSWS) are extracellular. The helical transmembrane segment at 258-278 (IFCAWCSLGFIVAAGGLCIAY) threads the bilayer. Topologically, residues 279–297 (PFISRTKIAQLKSGRDSTV) are cytoplasmic.

It belongs to the TMEM178 family. In terms of assembly, interacts with STIM1.

Its subcellular location is the endoplasmic reticulum membrane. Acts as a negative regulator of osteoclast differentiation in basal and inflammatory conditions by regulating TNFSF11-induced Ca (2+) fluxes, thereby controlling the induction of NFATC1. The sequence is that of Transmembrane protein 178A (TMEM178A) from Homo sapiens (Human).